The sequence spans 393 residues: Protein TBATA (393 aa).

Disordered stretches follow at residues 1–39 (MTTE…VGLQ), 168–188 (VPIG…DTWR), 202–264 (TKEI…DGGV), and 340–393 (EPQE…KAES). Basic and acidic residues predominate over residues 20–34 (PQPETKPENLPRSHG). Positions 173–185 (PQSNRNPQLSTSD) are enriched in polar residues. Composition is skewed to basic and acidic residues over residues 205–227 (IQPK…REQG) and 380–393 (PSED…KAES).

The protein belongs to the TBATA family. Interacts with KIF17. Interacts with UBA3. As to expression, expressed in the subcapsular region of the thymus and lymph node (at protein level). Highly expressed in thymic cortical stromal cells and testis. Lower levels found in brain cortex, hippocampus, kidney, cerebellum, skeletal muscle, epididymis and ovary. No expression detected in other lymphoid organs including bone marrow and spleen. Isoform 1 and isoform 2 are expressed predominantly in testis. Isoform 3, isoform 4 and isoform 5 are expressed predominantly in thymus although isoform 3 is also expressed in testis. In the CNS, highly expressed in restricted areas, the cerebellum and hippocampus.

Its subcellular location is the cytoplasm. The protein localises to the cytosol. The protein resides in the nucleus. Its function is as follows. Isoform 1 and isoform 2 may play a role in spermatid differentiation. Isoform 1 and isoform 2 regulate thymus function by modulating stromal cell proliferation via interference with the NEDD8 pathway. The chain is Protein TBATA (Tbata) from Mus musculus (Mouse).